The primary structure comprises 417 residues: Imidazolonepropionase (417 aa).

Residues His-77 and His-79 each coordinate Fe(3+). Residues His-77 and His-79 each coordinate Zn(2+). 4-imidazolone-5-propanoate is bound by residues Arg-86, Tyr-149, and His-182. Tyr-149 contributes to the N-formimidoyl-L-glutamate binding site. His-247 is a binding site for Fe(3+). Position 247 (His-247) interacts with Zn(2+). Residue Gln-250 coordinates 4-imidazolone-5-propanoate. Position 322 (Asp-322) interacts with Fe(3+). Asp-322 contacts Zn(2+). Residues Asn-324 and Gly-326 each coordinate N-formimidoyl-L-glutamate. A 4-imidazolone-5-propanoate-binding site is contributed by Thr-327.

This sequence belongs to the metallo-dependent hydrolases superfamily. HutI family. Zn(2+) is required as a cofactor. The cofactor is Fe(3+).

It is found in the cytoplasm. The enzyme catalyses 4-imidazolone-5-propanoate + H2O = N-formimidoyl-L-glutamate. The protein operates within amino-acid degradation; L-histidine degradation into L-glutamate; N-formimidoyl-L-glutamate from L-histidine: step 3/3. Catalyzes the hydrolytic cleavage of the carbon-nitrogen bond in imidazolone-5-propanoate to yield N-formimidoyl-L-glutamate. It is the third step in the universal histidine degradation pathway. In Cupriavidus taiwanensis (strain DSM 17343 / BCRC 17206 / CCUG 44338 / CIP 107171 / LMG 19424 / R1) (Ralstonia taiwanensis (strain LMG 19424)), this protein is Imidazolonepropionase.